Reading from the N-terminus, the 206-residue chain is Probable glutathione peroxidase 3, mitochondrial (206 aa).

The transit peptide at 1–12 directs the protein to the mitochondrion; it reads MPRSSRWVNQRA. The active site involves C80.

It belongs to the glutathione peroxidase family. As to quaternary structure, interacts with ABI1 and ABI2. In terms of tissue distribution, ubiquitous.

The protein localises to the mitochondrion. It catalyses the reaction 2 glutathione + H2O2 = glutathione disulfide + 2 H2O. The redox states are modulated by H(2)O(2). Functionally, may constitute a glutathione peroxidase-like protective system against oxidative stresses. Involved positively in abscisic acid (ABA) signaling pathway that regulates numerous ABA responses, such as stomatal closure, seed germination and inhibition of vegetative growth. Oxidizes and represses target proteins (e.g. the phosphatase activity of ABI1 and ABI2) when oxidized by H(2)O(2), probably after ABA signaling. Modulates the calcium channel activity in guard cells in response to ABA or H(2)O(2). Confers tolerance to drought stress, by enhancing the ABA-dependent stomatal closure. The sequence is that of Probable glutathione peroxidase 3, mitochondrial (GPX3) from Arabidopsis thaliana (Mouse-ear cress).